Consider the following 317-residue polypeptide: Acetyl-coenzyme A carboxylase carboxyl transferase subunit alpha (317 aa).

The region spanning 39 to 293 (KLEGKAQEAL…GNAIAEAMGS (255 aa)) is the CoA carboxyltransferase C-terminal domain.

The protein belongs to the AccA family. In terms of assembly, acetyl-CoA carboxylase is a heterohexamer composed of biotin carboxyl carrier protein (AccB), biotin carboxylase (AccC) and two subunits each of ACCase subunit alpha (AccA) and ACCase subunit beta (AccD).

It localises to the cytoplasm. It carries out the reaction N(6)-carboxybiotinyl-L-lysyl-[protein] + acetyl-CoA = N(6)-biotinyl-L-lysyl-[protein] + malonyl-CoA. It functions in the pathway lipid metabolism; malonyl-CoA biosynthesis; malonyl-CoA from acetyl-CoA: step 1/1. In terms of biological role, component of the acetyl coenzyme A carboxylase (ACC) complex. First, biotin carboxylase catalyzes the carboxylation of biotin on its carrier protein (BCCP) and then the CO(2) group is transferred by the carboxyltransferase to acetyl-CoA to form malonyl-CoA. The chain is Acetyl-coenzyme A carboxylase carboxyl transferase subunit alpha from Azorhizobium caulinodans (strain ATCC 43989 / DSM 5975 / JCM 20966 / LMG 6465 / NBRC 14845 / NCIMB 13405 / ORS 571).